Consider the following 284-residue polypeptide: Ribosomal RNA small subunit methyltransferase A (284 aa).

S-adenosyl-L-methionine is bound by residues Asn27, Leu29, Gly54, Glu75, Asp100, and Asn125.

It belongs to the class I-like SAM-binding methyltransferase superfamily. rRNA adenine N(6)-methyltransferase family. RsmA subfamily.

It localises to the cytoplasm. It catalyses the reaction adenosine(1518)/adenosine(1519) in 16S rRNA + 4 S-adenosyl-L-methionine = N(6)-dimethyladenosine(1518)/N(6)-dimethyladenosine(1519) in 16S rRNA + 4 S-adenosyl-L-homocysteine + 4 H(+). Its function is as follows. Specifically dimethylates two adjacent adenosines (A1518 and A1519) in the loop of a conserved hairpin near the 3'-end of 16S rRNA in the 30S particle. May play a critical role in biogenesis of 30S subunits. The sequence is that of Ribosomal RNA small subunit methyltransferase A from Protochlamydia amoebophila (strain UWE25).